The following is a 444-amino-acid chain: Orexin receptor type 2 (444 aa).

The segment covering 1–10 (MSGTKLEDSP) has biased composition (basic and acidic residues). Residues 1–30 (MSGTKLEDSPPCRNWSSAPELNETQEPFLN) form a disordered region. Over 1 to 54 (MSGTKLEDSPPCRNWSSAPELNETQEPFLNPTDYDDEEFLRYLWREYLHPKEYE) the chain is Extracellular. 2 N-linked (GlcNAc...) asparagine glycosylation sites follow: Asn-14 and Asn-22. A compositionally biased stretch (polar residues) spans 14-27 (NWSSAPELNETQEP). Residues 33-49 (DYDDEEFLRYLWREYLH) are required for response to orexin-A. The helical transmembrane segment at 55–75 (WVLIAGYIIVFVVALIGNVLV) threads the bilayer. Topologically, residues 76–88 (CVAVWKNHHMRTV) are cytoplasmic. A helical membrane pass occupies residues 89-110 (TNYFIVNLSLADVLVTITCLPA). The Extracellular segment spans residues 111 to 127 (TLVVDITETWFFGQSLC). The cysteines at positions 127 and 210 are disulfide-linked. Residues 128–150 (KVIPYLQTVSVSVSVLTLSCIAL) traverse the membrane as a helical segment. Residues 151 to 170 (DRWYAICHPLMFKSTAKRAR) lie on the Cytoplasmic side of the membrane. Residues 171-191 (NSIVIIWIVSCIIMIPQAIVM) traverse the membrane as a helical segment. Topologically, residues 192–222 (ECSTMLPGLANKTTLFTVCDERWGGEIYPKM) are extracellular. N-linked (GlcNAc...) asparagine glycosylation occurs at Asn-202. The helical transmembrane segment at 223–243 (YHICFFLVTYMAPLCLMVLAY) threads the bilayer. Residues 244 to 304 (LQIFRKLWCR…QIRARRKTAR (61 aa)) are Cytoplasmic-facing. A helical transmembrane segment spans residues 305–326 (MLMVVLLVFAICYLPISILNVL). Residues 327–342 (KRVFGMFTHTEDRETV) are Extracellular-facing. The chain crosses the membrane as a helical span at residues 343-366 (YAWFTFSHWLVYANSAANPIIYNF). Over 367–444 (LSGKFREEFK…ANGAGQLQNW (78 aa)) the chain is Cytoplasmic.

Belongs to the G-protein coupled receptor 1 family.

The protein localises to the cell membrane. Functionally, nonselective, high-affinity receptor for both orexin-A and orexin-B neuropeptides. Triggers an increase in cytoplasmic Ca(2+) levels in response to orexin-A binding. In Sus scrofa (Pig), this protein is Orexin receptor type 2 (HCRTR2).